The following is a 592-amino-acid chain: Peroxisomal targeting signal receptor (592 aa).

A Glycyl cysteine thioester (Cys-Gly) (interchain with G-Cter in ubiquitin) cross-link involves residue Cys10. The segment at 11–33 (SVNGNAVAQFNKHTQQDRSLQQQ) is amphipathic helix 1 (AH1). Lys22 is covalently cross-linked (Glycyl lysine isopeptide (Lys-Gly) (interchain with G-Cter in ubiquitin)). Over residues 22–46 (KHTQQDRSLQQQVANQHGNVAQNQG) the composition is skewed to polar residues. The interval 22-49 (KHTQQDRSLQQQVANQHGNVAQNQGFKK) is disordered. Positions 58–76 (RANLDQFMNNGAPQNSFQF) are amphipathic helix 2 (AH2). Short sequence motifs (wxxxF/Y motif) lie at residues 100–104 (WSQDF), 128–132 (WASEF), and 185–189 (WENQF). Residues 223-239 (FQEVWDSLNSESFENDF) form an amphipathic helix 4 (AH4) region. A WxxxF/Y motif 4 motif is present at residues 262-266 (WEKDF). TPR repeat units follow at residues 295–329 (DQDP…DENH), 330–363 (VDAW…HPEN), 440–473 (ADVQ…RPDD), 475–507 (ILWN…KPTF), and 509–541 (RARY…HQVE).

The protein belongs to the peroxisomal targeting signal receptor family. In terms of assembly, interacts (via WxxxF/Y and LVxEF motifs) with PEX14; promoting translocation through the PEX13-PEX14 docking complex. In terms of processing, monoubiquitinated at Cys-10 by PEX2 during PEX5 passage through the retrotranslocation channel: monoubiquitination acts as a signal for PEX5 extraction and is required for proper export from peroxisomes and recycling. When PEX5 recycling is compromised, polyubiquitinated at Lys-22 by PEX10 during its passage through the retrotranslocation channel, leading to its degradation.

Its subcellular location is the cytoplasm. The protein resides in the cytosol. It localises to the peroxisome matrix. Functionally, receptor that mediates peroxisomal import of proteins containing a C-terminal PTS1-type tripeptide peroxisomal targeting signal (SKL-type). Binds to cargo proteins containing a PTS1 peroxisomal targeting signal in the cytosol, and translocates them into the peroxisome matrix by passing through the PEX13-PEX14 docking complex along with cargo proteins. PEX5 receptor is then retrotranslocated into the cytosol, leading to release of bound cargo in the peroxisome matrix, and reset for a subsequent peroxisome import cycle. The sequence is that of Peroxisomal targeting signal receptor (PEX5) from Candida albicans (strain SC5314 / ATCC MYA-2876) (Yeast).